We begin with the raw amino-acid sequence, 165 residues long: Plastocyanin, chloroplastic (165 aa).

Residues 1-66 constitute a chloroplast transit peptide; sequence MATVTSSAAV…AGILAGNAMA (66 aa). Residues 67–165 enclose the Plastocyanin-like domain; the sequence is AEVLLGSSDG…AGMVGKVTVN (99 aa). The Cu cation site is built by His103, Cys150, His153, and Met158.

This sequence belongs to the plastocyanin family. Requires Cu(2+) as cofactor.

The protein localises to the plastid. Its subcellular location is the chloroplast thylakoid membrane. Participates in electron transfer between P700 and the cytochrome b6-f complex in photosystem I. The sequence is that of Plastocyanin, chloroplastic (PETE) from Silene latifolia subsp. alba (White campion).